Reading from the N-terminus, the 24-residue chain is Poly-His-poly-Gly peptide 1 (24 aa).

Positions 1 to 13 (EDDHHHHHHHHHG) are enriched in basic residues. The tract at residues 1 to 24 (EDDHHHHHHHHHGVGGGGGGGGGG) is disordered. Positions 14 to 24 (VGGGGGGGGGG) are enriched in gly residues.

In terms of tissue distribution, expressed by the venom gland.

It is found in the secreted. Functionally, may serve as a metalloproteinase inhibitor during glandular storage. Their inhibition may be instantly disengaged, by dilution or physiochemical change, when venom is injected into tissue of the victim. The sequence is that of Poly-His-poly-Gly peptide 1 from Atheris chlorechis (Western bush viper).